Reading from the N-terminus, the 501-residue chain is Nucleic-acid-binding protein from transposon X-element (501 aa).

2 disordered regions span residues 20–71 (SSPQ…GNSN) and 105–128 (AAAK…SKPP). The CCHC-type zinc finger occupies 285–302 (VQCHRCQQIGHTAKYCRK). Disordered regions lie at residues 353–385 (RPRS…SRGG) and 400–443 (QPMS…TDAS). The segment covering 407 to 422 (QQQKQKQQPYDGSPSR) has biased composition (low complexity). The span at 434 to 443 (GTLQRSTDAS) shows a compositional bias: polar residues.

The protein resides in the virion. Strongly basic protein that binds directly to retroviral RNA and may be involved in its packaging and in the reverse transcription process. The protein is Nucleic-acid-binding protein from transposon X-element of Drosophila melanogaster (Fruit fly).